Reading from the N-terminus, the 152-residue chain is SsrA-binding protein (152 aa).

The protein belongs to the SmpB family.

It is found in the cytoplasm. Required for rescue of stalled ribosomes mediated by trans-translation. Binds to transfer-messenger RNA (tmRNA), required for stable association of tmRNA with ribosomes. tmRNA and SmpB together mimic tRNA shape, replacing the anticodon stem-loop with SmpB. tmRNA is encoded by the ssrA gene; the 2 termini fold to resemble tRNA(Ala) and it encodes a 'tag peptide', a short internal open reading frame. During trans-translation Ala-aminoacylated tmRNA acts like a tRNA, entering the A-site of stalled ribosomes, displacing the stalled mRNA. The ribosome then switches to translate the ORF on the tmRNA; the nascent peptide is terminated with the 'tag peptide' encoded by the tmRNA and targeted for degradation. The ribosome is freed to recommence translation, which seems to be the essential function of trans-translation. The protein is SsrA-binding protein of Rickettsia montanensis.